A 176-amino-acid chain; its full sequence is 3-hydroxyacyl-[acyl-carrier-protein] dehydratase FabZ (176 aa).

His54 is a catalytic residue.

Belongs to the thioester dehydratase family. FabZ subfamily.

It is found in the cytoplasm. It carries out the reaction a (3R)-hydroxyacyl-[ACP] = a (2E)-enoyl-[ACP] + H2O. Its function is as follows. Involved in unsaturated fatty acids biosynthesis. Catalyzes the dehydration of short chain beta-hydroxyacyl-ACPs and long chain saturated and unsaturated beta-hydroxyacyl-ACPs. The chain is 3-hydroxyacyl-[acyl-carrier-protein] dehydratase FabZ from Yersinia pseudotuberculosis serotype O:1b (strain IP 31758).